Consider the following 368-residue polypeptide: Protein mab-21-like (368 aa).

Belongs to the mab-21 family.

This is Protein mab-21-like from Drosophila melanogaster (Fruit fly).